A 553-amino-acid polypeptide reads, in one-letter code: Mannuronan C5-epimerase AlgE4 (553 aa).

PbH1 repeat units follow at residues 133-155, 157-179, 180-202, 204-226, 234-256, 257-279, 280-301, and 320-342; these read DRDV…DPHE, TINL…VADY, LVDS…NVVT, THDF…VVQR, PSNI…LLKM, TSDI…RVYG, AQDV…AVPE, and TLNT…GIQE. The segment at 367–427 is disordered; that stretch reads YGPHSTVSGE…DILDGGAGRD (61 aa). 2 Hemolysin-type calcium-binding repeats span residues 403 to 420 and 421 to 438; these read QGGS…DDIL and DGGA…ADTF.

The protein belongs to the D-mannuronate C5-epimerase family. It depends on Ca(2+) as a cofactor.

It is found in the secreted. It carries out the reaction [(1-&gt;4)-beta-D-mannuronosyl](n) = [alginate](n). It functions in the pathway glycan biosynthesis; alginate biosynthesis. With respect to regulation, inhibited by zinc. Functionally, converts beta-D-mannuronic acid (M) to alpha-L-guluronic acid (G), but introduces almost exclusively MG blocks, producing a polymer with non-gel-forming capacity. The sequence is that of Mannuronan C5-epimerase AlgE4 from Azotobacter vinelandii.